We begin with the raw amino-acid sequence, 161 residues long: Protein-export protein SecB (161 aa).

It belongs to the SecB family. In terms of assembly, homotetramer, a dimer of dimers. One homotetramer interacts with 1 SecA dimer.

It is found in the cytoplasm. In terms of biological role, one of the proteins required for the normal export of preproteins out of the cell cytoplasm. It is a molecular chaperone that binds to a subset of precursor proteins, maintaining them in a translocation-competent state. It also specifically binds to its receptor SecA. The polypeptide is Protein-export protein SecB (Shewanella sp. (strain MR-7)).